The following is a 2581-amino-acid chain: Chromodomain-helicase-DNA-binding protein 8 (2581 aa).

5 disordered regions span residues 22 to 114 (DDSF…QTST), 253 to 283 (VKGS…TQGE), 349 to 392 (QKIQ…SPGQ), 429 to 582 (ALSS…QVKR), and 596 to 615 (DEEE…PILP). Polar residues-rich tracts occupy residues 42-51 (SLDSLDQMNQ) and 94-114 (DYTT…QTST). Positions 255–267 (GSAPAGNPGATGP) are enriched in low complexity. Positions 355–370 (PQPPSSQPQPQQPPST) are enriched in pro residues. A Phosphoserine modification is found at serine 432. Composition is skewed to basic and acidic residues over residues 445 to 462 (GMEE…EKAN) and 493 to 516 (RPEE…EEKP). 2 positions are modified to phosphoserine: serine 553 and serine 562. Positions 572-582 (QKRRSNRQVKR) are enriched in basic residues. Lysine 609 participates in a covalent cross-link: Glycyl lysine isopeptide (Lys-Gly) (interchain with G-Cter in SUMO). Chromo domains are found at residues 642-709 (AIVD…AQMR) and 724-790 (VEVD…RVNR). One can recognise a Helicase ATP-binding domain in the interval 823 to 997 (LFNWYNRQNC…FSLLHFLEPS (175 aa)). Residue 836 to 843 (DEMGLGKT) participates in ATP binding. The DEAH box motif lies at 948-951 (DEAH). The Helicase C-terminal domain occupies 1137-1288 (LIDKLLPKLK…KAVLQSMSGR (152 aa)). Serine 1420 and serine 1424 each carry phosphoserine. The tract at residues 1692–1712 (EDPEYKPLQGPPKDQDDEGDP) is disordered. The segment at 1789–2302 (IARREKQQRW…LVELEVECME (514 aa)) is interaction with FAM124B. 2 positions are modified to phosphoserine: serine 1976 and serine 1978. The disordered stretch occupies residues 1991–2116 (SRTASPLPLR…TDQSRSKLYD (126 aa)). Residue threonine 1993 is modified to Phosphothreonine. 2 positions are modified to phosphoserine: serine 1995 and serine 2008. A compositionally biased stretch (polar residues) spans 2011–2021 (ETATQVPSLES). Lysine 2025 participates in a covalent cross-link: Glycyl lysine isopeptide (Lys-Gly) (interchain with G-Cter in SUMO2). Serine 2046 carries the post-translational modification Phosphoserine. Threonine 2051 carries the post-translational modification Phosphothreonine. Residues 2064 to 2073 (EDEDDSDSEL) are compositionally biased toward acidic residues. Phosphoserine is present on residues serine 2069 and serine 2071. Positions 2076 to 2095 (SKLSPSSSSSSSSSSSSSST) are enriched in low complexity. A compositionally biased stretch (basic and acidic residues) spans 2103 to 2116 (EEKLTDQSRSKLYD). 3 positions are modified to phosphoserine: serine 2182, serine 2200, and serine 2202. Residues 2189–2229 (GILGPGNHLLDSPSLTPGEYGDSPVPTPRSSSAASMAEEEA) form a disordered region. At threonine 2204 the chain carries Phosphothreonine. A Phosphoserine modification is found at serine 2211. Threonine 2215 carries the phosphothreonine modification. Residues 2218–2229 (SSSAASMAEEEA) show a composition bias toward low complexity. Serine 2223 is subject to Phosphoserine. Residue lysine 2256 forms a Glycyl lysine isopeptide (Lys-Gly) (interchain with G-Cter in SUMO2) linkage. The interval 2481-2581 (PSSPHVDSST…NSDSSEDADD (101 aa)) is disordered. Positions 2492 to 2510 (LHHHHHHPHPHHHHHHHPG) are enriched in basic residues. A Phosphoserine modification is found at serine 2519. Over residues 2519–2528 (SPVTTASGTT) the composition is skewed to polar residues. Positions 2536–2550 (PEEDDDEDEEDDDDL) are enriched in acidic residues.

Belongs to the SNF2/RAD54 helicase family. CHD8 subfamily. In terms of assembly, interacts with p53/TP53, histone H1, CTNNB1, CTCF and PIAS3. Component of some MLL1/MLL complex, at least composed of the core components KMT2A/MLL1, ASH2L, HCFC1/HCF1, WDR5 and RBBP5, as well as the facultative components BACC1, CHD8, E2F6, HSP70, INO80C, KANSL1, LAS1L, MAX, MCRS1, MGA, KAT8/MOF, PELP1, PHF20, PRP31, RING2, RUVB1/TIP49A, RUVB2/TIP49B, SENP3, TAF1, TAF4, TAF6, TAF7, TAF9 and TEX10. Interacts with CHD7. Interacts with FAM124B. Interacts with TLK2. Interacts with HNRNPL in an RNA-dependent manner. Sumoylated.

The protein localises to the nucleus. It carries out the reaction ATP + H2O = ADP + phosphate + H(+). ATP-dependent chromatin-remodeling factor, it slides nucleosomes along DNA; nucleosome sliding requires ATP. Acts as a transcription repressor by remodeling chromatin structure and recruiting histone H1 to target genes. Suppresses p53/TP53-mediated apoptosis by recruiting histone H1 and preventing p53/TP53 transactivation activity. Acts as a negative regulator of Wnt signaling pathway by regulating beta-catenin (CTNNB1) activity. Negatively regulates CTNNB1-targeted gene expression by being recruited specifically to the promoter regions of several CTNNB1 responsive genes. Involved in both enhancer blocking and epigenetic remodeling at chromatin boundary via its interaction with CTCF. Acts as a suppressor of STAT3 activity by suppressing the LIF-induced STAT3 transcriptional activity. Also acts as a transcription activator via its interaction with ZNF143 by participating in efficient U6 RNA polymerase III transcription. Regulates alternative splicing of a core group of genes involved in neuronal differentiation, cell cycle and DNA repair. Enables H3K36me3-coupled transcription elongation and co-transcriptional RNA processing likely via interaction with HNRNPL. This Homo sapiens (Human) protein is Chromodomain-helicase-DNA-binding protein 8.